We begin with the raw amino-acid sequence, 123 residues long: NHL-repeat-containing protein 4 (123 aa).

2 NHL repeats span residues 35–78 (QPLG…FPRA) and 79–119 (GPPI…YQGL).

The polypeptide is NHL-repeat-containing protein 4 (NHLRC4) (Homo sapiens (Human)).